We begin with the raw amino-acid sequence, 534 residues long: DM7 family protein GE17491 (534 aa).

This sequence belongs to the DM7 family.

The sequence is that of DM7 family protein GE17491 from Drosophila yakuba (Fruit fly).